The following is a 382-amino-acid chain: MKLKPNDIYIPLNSIQFKIHHNDINIKYDTEEDNNNNNNNNNNNRYIDDNEKMKISEDESIFKSINNDNKNQQNDNIINSFNRGSNSFLFNIINFYKSPRFLSGGAVLLYVMTTYDFSASNFLLFNQMVVTIVILHILKHFNILKINTNFEKETIKKLMPLSFCYIINVLLGLDSLKQLNIPMYSALKRLVAVVILVMEYFILKKVSPPKIIASVVVMVIGAVVAGITDLSFNSLGYSLVLLSCIFQASYLIYVKKVASNMSTYDMLYYNSVLSLPITIFLMIVNQEIEYFQTFEHLYDSSFQAYFILSIFLGFFLNFCIFFCTSVNSPLTTSVTGQVKNIASTIIGAMVFNDIIIHPINILGLIINIIGSIWYSFLKLTSK.

The next 7 helical transmembrane spans lie at 117 to 137, 183 to 203, 211 to 231, 234 to 254, 264 to 284, 302 to 322, and 354 to 374; these read FSAS…ILHI, MYSA…YFIL, IIAS…TDLS, SLGY…LIYV, YDML…LMIV, FQAY…CIFF, and IIIH…SIWY.

This sequence belongs to the TPT transporter family. SLC35D subfamily.

It is found in the membrane. Functionally, may be nvolved in the import of UDP-sugars. This Dictyostelium discoideum (Social amoeba) protein is Putative UDP-sugar transporter DDB_G0278631.